A 274-amino-acid chain; its full sequence is Ethanolamine ammonia-lyase small subunit (274 aa).

Adenosylcob(III)alamin-binding residues include Val-161, Glu-182, and Cys-211.

The protein belongs to the EutC family. As to quaternary structure, the basic unit is a heterodimer which dimerizes to form tetramers. The heterotetramers trimerize; 6 large subunits form a core ring with 6 small subunits projecting outwards. It depends on adenosylcob(III)alamin as a cofactor.

The protein resides in the bacterial microcompartment. The enzyme catalyses ethanolamine = acetaldehyde + NH4(+). It participates in amine and polyamine degradation; ethanolamine degradation. Its function is as follows. Catalyzes the deamination of various vicinal amino-alcohols to oxo compounds. Allows this organism to utilize ethanolamine as the sole source of nitrogen and carbon in the presence of external vitamin B12. The protein is Ethanolamine ammonia-lyase small subunit of Pseudomonas fluorescens (strain Pf0-1).